A 246-amino-acid chain; its full sequence is Major prion protein (246 aa).

The signal sequence occupies residues 1 to 15; that stretch reads MLVLFVATWSDLGLC. The segment at 16 to 223 is interaction with GRB2, ERI3 and SYN1; the sequence is KKRPKPGGWN…ESQAYYQRGS (208 aa). The tract at residues 18-102 is disordered; that stretch reads RPKPGGWNTG…HKPSKPKTSM (85 aa). Repeat copies occupy residues 44-52, 53-60, 61-68, 69-76, and 77-84. The tract at residues 44–84 is 5 X 8 AA tandem repeats of P-H-G-G-G-W-G-Q; it reads PQGGGGWGQPHGGGWGQPHGGGWGQPHGGGWGQPHGGGWGQ. Gly residues predominate over residues 45 to 88; that stretch reads QGGGGWGQPHGGGWGQPHGGGWGQPHGGGWGQPHGGGWGQGGGT. H54, G55, G56, H62, G63, G64, H70, G71, G72, H78, G79, and G80 together coordinate Cu(2+). Positions 91 to 102 are enriched in basic residues; the sequence is QWHKPSKPKTSM. C172 and C207 are joined by a disulfide. N-linked (GlcNAc...) asparagine glycosylation is found at N174 and N190. The GPI-anchor amidated serine moiety is linked to residue S223. Residues 224–246 constitute a propeptide, removed in mature form; sequence SMVLFSSPPVILLISFLIFLIVG.

The protein belongs to the prion family. Monomer and homodimer. Has a tendency to aggregate into amyloid fibrils containing a cross-beta spine, formed by a steric zipper of superposed beta-strands. Soluble oligomers may represent an intermediate stage on the path to fibril formation. Copper binding may promote oligomerization. Interacts with GRB2, APP, ERI3/PRNPIP and SYN1. Mislocalized cytosolically exposed PrP interacts with MGRN1; this interaction alters MGRN1 subcellular location and causes lysosomal enlargement. Interacts with KIAA1191.

Its subcellular location is the cell membrane. It localises to the golgi apparatus. Its function is as follows. Its primary physiological function is unclear. Has cytoprotective activity against internal or environmental stresses. May play a role in neuronal development and synaptic plasticity. May be required for neuronal myelin sheath maintenance. May play a role in iron uptake and iron homeostasis. Soluble oligomers are toxic to cultured neuroblastoma cells and induce apoptosis (in vitro). Association with GPC1 (via its heparan sulfate chains) targets PRNP to lipid rafts. Also provides Cu(2+) or Zn(2+) for the ascorbate-mediated GPC1 deaminase degradation of its heparan sulfate side chains. The protein is Major prion protein (PRNP) of Cercocebus atys (Sooty mangabey).